The sequence spans 253 residues: Imidazole glycerol phosphate synthase subunit HisF (253 aa).

Active-site residues include Asp11 and Asp130.

It belongs to the HisA/HisF family. Heterodimer of HisH and HisF.

It is found in the cytoplasm. It carries out the reaction 5-[(5-phospho-1-deoxy-D-ribulos-1-ylimino)methylamino]-1-(5-phospho-beta-D-ribosyl)imidazole-4-carboxamide + L-glutamine = D-erythro-1-(imidazol-4-yl)glycerol 3-phosphate + 5-amino-1-(5-phospho-beta-D-ribosyl)imidazole-4-carboxamide + L-glutamate + H(+). The protein operates within amino-acid biosynthesis; L-histidine biosynthesis; L-histidine from 5-phospho-alpha-D-ribose 1-diphosphate: step 5/9. In terms of biological role, IGPS catalyzes the conversion of PRFAR and glutamine to IGP, AICAR and glutamate. The HisF subunit catalyzes the cyclization activity that produces IGP and AICAR from PRFAR using the ammonia provided by the HisH subunit. In Geotalea uraniireducens (strain Rf4) (Geobacter uraniireducens), this protein is Imidazole glycerol phosphate synthase subunit HisF.